A 557-amino-acid polypeptide reads, in one-letter code: Arginine--tRNA ligase (557 aa).

The short motif at 128–138 (ANPTGPLHVGH) is the 'HIGH' region element.

Belongs to the class-I aminoacyl-tRNA synthetase family. As to quaternary structure, monomer.

Its subcellular location is the cytoplasm. The catalysed reaction is tRNA(Arg) + L-arginine + ATP = L-arginyl-tRNA(Arg) + AMP + diphosphate. The sequence is that of Arginine--tRNA ligase from Thiobacillus denitrificans (strain ATCC 25259 / T1).